Here is a 171-residue protein sequence, read N- to C-terminus: CDP-archaeol synthase (171 aa).

5 helical membrane-spanning segments follow: residues 7-27 (MFWA…PVLL), 55-75 (FLGG…LTPA), 84-104 (VLLA…GSFI), 115-135 (PAVG…AYPV), and 141-161 (GQML…NYFA).

The protein belongs to the CDP-archaeol synthase family. The cofactor is Mg(2+).

It is found in the cell membrane. The catalysed reaction is 2,3-bis-O-(geranylgeranyl)-sn-glycerol 1-phosphate + CTP + H(+) = CDP-2,3-bis-O-(geranylgeranyl)-sn-glycerol + diphosphate. The protein operates within membrane lipid metabolism; glycerophospholipid metabolism. Catalyzes the formation of CDP-2,3-bis-(O-geranylgeranyl)-sn-glycerol (CDP-archaeol) from 2,3-bis-(O-geranylgeranyl)-sn-glycerol 1-phosphate (DGGGP) and CTP. This reaction is the third ether-bond-formation step in the biosynthesis of archaeal membrane lipids. This is CDP-archaeol synthase from Thermococcus gammatolerans (strain DSM 15229 / JCM 11827 / EJ3).